A 481-amino-acid chain; its full sequence is Glutamate--tRNA ligase (481 aa).

The 'HIGH' region motif lies at 11 to 21 (PSPTGLLHIGN). A 'KMSKS' region motif is present at residues 255 to 259 (KLSKR). Residue K258 participates in ATP binding.

It belongs to the class-I aminoacyl-tRNA synthetase family. Glutamate--tRNA ligase type 1 subfamily. As to quaternary structure, monomer.

The protein localises to the cytoplasm. The catalysed reaction is tRNA(Glu) + L-glutamate + ATP = L-glutamyl-tRNA(Glu) + AMP + diphosphate. Functionally, catalyzes the attachment of glutamate to tRNA(Glu) in a two-step reaction: glutamate is first activated by ATP to form Glu-AMP and then transferred to the acceptor end of tRNA(Glu). The sequence is that of Glutamate--tRNA ligase from Streptococcus pyogenes serotype M6 (strain ATCC BAA-946 / MGAS10394).